Here is a 160-residue protein sequence, read N- to C-terminus: Protein-export protein SecB (160 aa).

Belongs to the SecB family. As to quaternary structure, homotetramer, a dimer of dimers. One homotetramer interacts with 1 SecA dimer.

It is found in the cytoplasm. In terms of biological role, one of the proteins required for the normal export of preproteins out of the cell cytoplasm. It is a molecular chaperone that binds to a subset of precursor proteins, maintaining them in a translocation-competent state. It also specifically binds to its receptor SecA. This chain is Protein-export protein SecB, found in Agrobacterium fabrum (strain C58 / ATCC 33970) (Agrobacterium tumefaciens (strain C58)).